The sequence spans 425 residues: Serine--tRNA ligase (425 aa).

An L-serine-binding site is contributed by 231–233; sequence TAE. 262–264 serves as a coordination point for ATP; that stretch reads RSE. Glu-285 is an L-serine binding site. 349–352 serves as a coordination point for ATP; sequence EISS. Residue Ser-385 participates in L-serine binding.

Belongs to the class-II aminoacyl-tRNA synthetase family. Type-1 seryl-tRNA synthetase subfamily. Homodimer. The tRNA molecule binds across the dimer.

It is found in the cytoplasm. It carries out the reaction tRNA(Ser) + L-serine + ATP = L-seryl-tRNA(Ser) + AMP + diphosphate + H(+). It catalyses the reaction tRNA(Sec) + L-serine + ATP = L-seryl-tRNA(Sec) + AMP + diphosphate + H(+). It participates in aminoacyl-tRNA biosynthesis; selenocysteinyl-tRNA(Sec) biosynthesis; L-seryl-tRNA(Sec) from L-serine and tRNA(Sec): step 1/1. Functionally, catalyzes the attachment of serine to tRNA(Ser). Is also able to aminoacylate tRNA(Sec) with serine, to form the misacylated tRNA L-seryl-tRNA(Sec), which will be further converted into selenocysteinyl-tRNA(Sec). This chain is Serine--tRNA ligase, found in Bacillus licheniformis (strain ATCC 14580 / DSM 13 / JCM 2505 / CCUG 7422 / NBRC 12200 / NCIMB 9375 / NCTC 10341 / NRRL NRS-1264 / Gibson 46).